The following is an 86-amino-acid chain: Gas vesicle protein M (86 aa).

This sequence belongs to the gas vesicle GvpA family. In terms of assembly, gvpF to GvpM interact with each other in vitro, and may form multi-subunit complex(es). Might interact with GvpA.

The protein localises to the gas vesicle. Proteins GvpF to GvpM might be involved in nucleating gas vesicle formation. A minor component of the gas vesicle. Gas vesicles are small, hollow, gas filled protein structures found in some microorganisms. They allow positioning of halobacteria at the optimal depth for growth in the poorly aerated, shallow brine pools of their habitat. Its function is as follows. Expression of a 9.5 kb mc-vac DNA fragment containing 2 divergently transcribed regions (gvpD-gvpE-gvpF-gvpG-gvpH-gvpI-gvpJ-gvpK-gvpL-gvpM and gvpA-gvpC-gvpN-gvpO) allows H.volcanii to produce gas vesicles. This is Gas vesicle protein M from Haloferax mediterranei (strain ATCC 33500 / DSM 1411 / JCM 8866 / NBRC 14739 / NCIMB 2177 / R-4) (Halobacterium mediterranei).